The sequence spans 401 residues: Decapping and exoribonuclease protein (401 aa).

A disordered region spans residues 1–27 (MEGNKSMQREKIDRPMKRGPEQNSLSP). The span at 7 to 20 (MQREKIDRPMKRGP) shows a compositional bias: basic and acidic residues. Residues R69, E114, and 149–151 (WRG) each bind substrate. E210 contributes to the Mg(2+) binding site. Positions 235 and 252 each coordinate substrate. Residues E252, D254, E271, and L272 each coordinate Mg(2+). Residues K273 and Q298 each coordinate substrate.

It belongs to the DXO/Dom3Z family. It depends on Mg(2+) as a cofactor.

Its subcellular location is the nucleus. The enzyme catalyses a 5'-end triphospho-ribonucleoside in mRNA + H2O = a 5'-end phospho-ribonucleoside in mRNA + diphosphate + H(+). It catalyses the reaction a 5'-end NAD(+)-phospho-ribonucleoside in mRNA + H2O = a 5'-end phospho-ribonucleoside in mRNA + NAD(+) + H(+). It carries out the reaction a 5'-end NAD(+)-phospho-ribonucleoside in snoRNA + H2O = a 5'-end phospho-ribonucleoside in snoRNA + NAD(+) + H(+). The catalysed reaction is a 5'-end (N(7)-methyl 5'-triphosphoguanosine)-ribonucleoside-ribonucleotide in mRNA + H2O = a (N(7)-methyl 5'-triphosphoguanosine)-nucleoside + a 5'-end phospho-ribonucleoside in mRNA + H(+). The enzyme catalyses a 5'-end FAD-phospho-ribonucleoside in mRNA + H2O = a 5'-end phospho-ribonucleoside in mRNA + FAD + H(+). It catalyses the reaction a 5'-end CoA-ribonucleoside in mRNA + H2O = 3'-dephospho-CoA + a 5'-end phospho-ribonucleoside in mRNA + H(+). In terms of biological role, decapping enzyme for NAD-capped RNAs: specifically hydrolyzes the nicotinamide adenine dinucleotide (NAD) cap from a subset of RNAs by removing the entire NAD moiety from the 5'-end of an NAD-capped RNA. The NAD-cap is present at the 5'-end of some RNAs and snoRNAs. In contrast to the canonical 5'-end N7 methylguanosine (m7G) cap, the NAD cap promotes mRNA decay. Also acts as a non-canonical decapping enzyme that removes the entire cap structure of m7G capped or incompletely capped RNAs and mediates their subsequent degradation. Specifically degrades pre-mRNAs with a defective 5'-end m7G cap and is part of a pre-mRNA capping quality control. Has decapping activity toward incomplete 5'-end m7G cap mRNAs such as unmethylated 5'-end-capped RNA (cap0), while it has no activity toward 2'-O-ribose methylated m7G cap (cap1). Also has 5'-3' exoribonuclease activities: The 5'-end monophosphate RNA is then degraded by the 5'-3' exoribonuclease activity, enabling this enzyme to decap and degrade incompletely capped mRNAs. Also possesses RNA 5'-pyrophosphohydrolase activity by hydrolyzing the 5'-end triphosphate to release pyrophosphates. Exhibits decapping activity towards FAD-capped RNAs. Exhibits decapping activity towards dpCoA-capped RNAs in vitro. The chain is Decapping and exoribonuclease protein from Xenopus laevis (African clawed frog).